We begin with the raw amino-acid sequence, 228 residues long: Probable U3 small nucleolar RNA-associated protein 11 (228 aa).

Disordered regions lie at residues 1 to 23 (MSSL…EARK) and 192 to 211 (SMQK…DDEL). Basic and acidic residues predominate over residues 12–23 (AHKERSQPEARK).

The protein belongs to the UTP11 family. In terms of assembly, component of the ribosomal small subunit (SSU) processome.

The protein resides in the nucleus. The protein localises to the nucleolus. Functionally, involved in nucleolar processing of pre-18S ribosomal RNA. This Arabidopsis thaliana (Mouse-ear cress) protein is Probable U3 small nucleolar RNA-associated protein 11.